The sequence spans 112 residues: Nitrogen regulatory protein GlnK (112 aa).

Thr29 serves as a coordination point for ADP. Gly37 provides a ligand contact to ATP. ADP is bound at residue 38-39 (RQ). Tyr51 is modified (O-UMP-tyrosine). Residues Ala64, 87–90 (GDGK), and 101–103 (RIR) each bind ADP. ATP is bound by residues Ala64, 87–90 (GDGK), and 101–103 (RIR).

This sequence belongs to the P(II) protein family. As to quaternary structure, homotrimer. In response to elevation of the extracellular ammonium concentration, interacts and forms a complex with AmtB. Post-translationally, uridylylated/deuridylylated by GlnD. Fully uridylylated in nitrogen-limited conditions and deuridylylated when extracellular ammonium increases.

The protein localises to the cytoplasm. Its subcellular location is the cell inner membrane. Formation of the GlnK-AmtB complex is influenced by intracellular pools of the effector molecules ATP, ADP, Mg(2+) and 2-oxoglutarate. The GlnK-AmtB interaction is also controlled by the level of intracellular glutamine and the uridylylation status of GlnK. In terms of biological role, involved in the regulation of nitrogen metabolism. Regulates the activity of its targets by protein-protein interaction in response to the nitrogen status of the cell. Involved in the regulation of the ammonium transporter AmtB so as to optimize ammonium uptake under all growth conditions. In nitrogen-limited conditions, GlnK does not interact with AmtB, which remains active and imports ammonium. When extracellular ammonium increases, GlnK associates tightly with AmtB in the inner membrane, thereby inhibiting the transporter activity. This Escherichia coli O157:H7 protein is Nitrogen regulatory protein GlnK (glnK).